The primary structure comprises 99 residues: Large ribosomal subunit protein bL27 (99 aa).

Residues 1–9 (MLIMNLQLF) constitute a propeptide that is removed on maturation.

The protein belongs to the bacterial ribosomal protein bL27 family. Post-translationally, the N-terminus is cleaved by ribosomal processing cysteine protease Prp.

In Clostridium botulinum (strain Alaska E43 / Type E3), this protein is Large ribosomal subunit protein bL27.